The primary structure comprises 635 residues: Threonine--tRNA ligase (635 aa).

The TGS domain maps to 1–61 (MIQITLPDAS…EKDSALSIIT (61 aa)). The interval 242 to 533 (DHRKLGKELD…LIEEHAGALP (292 aa)) is catalytic. Zn(2+)-binding residues include C333, H384, and H510.

It belongs to the class-II aminoacyl-tRNA synthetase family. Homodimer. It depends on Zn(2+) as a cofactor.

The protein resides in the cytoplasm. It catalyses the reaction tRNA(Thr) + L-threonine + ATP = L-threonyl-tRNA(Thr) + AMP + diphosphate + H(+). Catalyzes the attachment of threonine to tRNA(Thr) in a two-step reaction: L-threonine is first activated by ATP to form Thr-AMP and then transferred to the acceptor end of tRNA(Thr). Also edits incorrectly charged L-seryl-tRNA(Thr). The sequence is that of Threonine--tRNA ligase from Polaromonas sp. (strain JS666 / ATCC BAA-500).